The sequence spans 1203 residues: Cation-transporting ATPase catp-5 (1203 aa).

At 1 to 68 (MNTSEREPLL…YAYKETIGRQ (68 aa)) the chain is on the cytoplasmic side. The segment at 21–42 (TTDNPSTKIMKREKDNPKAKTT) is disordered. The chain crosses the membrane as a helical span at residues 69 to 89 (ILFWLLTIVTLGFYQLLAYWV). Topologically, residues 90-209 (KSLFVKVRFQ…RKIYNMNALA (120 aa)) are extracellular. A helical membrane pass occupies residues 210 to 230 (LALTPILVILFKEVLGPFYLF). Over 231-242 (QCFSVALWYSDN) the chain is Cytoplasmic. Residues 243–263 (YAYYASVIVIITVGSAAVAVY) form a helical membrane-spanning segment. Over 264–297 (QMRAQEKRIRNMVGDTISVIVRRDGHDITIDASE) the chain is Extracellular. Residues 298–318 (IVPMDILILPSNTFILPCDCL) traverse the membrane as a helical segment. At 319 to 414 (LMNGTVIVNE…KPQEKEALKD (96 aa)) the chain is on the cytoplasmic side. Residues 415-435 (VMVFILVLGFIALIGFIYTVI) form a helical membrane-spanning segment. Topologically, residues 436–451 (EMVSRGESLKHIIIRS) are extracellular. A helical transmembrane segment spans residues 452 to 472 (LDIITIVVPPALPAAMSVGII). At 473 to 935 (NANSRLKKKK…KEGRCALVTS (463 aa)) the chain is on the cytoplasmic side. The active-site 4-aspartylphosphate intermediate is D503. The interval 595 to 617 (ETQDFDTVQPTVLRPPPEQATYH) is disordered. D883 and D887 together coordinate Mg(2+). Residues 936 to 956 (YAVSKYMAAYSLNEFLSVMLL) form a helical membrane-spanning segment. At 957–962 (YNDGTN) the chain is on the extracellular side. The chain crosses the membrane as a helical span at residues 963–983 (ISDGQFLYIDLVLITLVALFL). Residues 984–1007 (GNTEASRKLSGIPPPRRLATSAFY) are Cytoplasmic-facing. A helical membrane pass occupies residues 1008–1028 (FSVFGQMFFNIITQTTGYLLV). Residues 1029 to 1046 (RGQSWYVPNPEELDNTTT) are Extracellular-facing. A helical membrane pass occupies residues 1047–1067 (MIGTTVFFTSCCMYLGYAFVY). Residues 1068-1085 (SKGHPYRRSVFTNWLLCG) are Cytoplasmic-facing. A helical membrane pass occupies residues 1086–1106 (IIFVIGAINMVMIFTNMGFLM). At 1107-1120 (NLMGFVYVPSTSMR) the chain is on the extracellular side. A helical transmembrane segment spans residues 1121-1141 (FILLAISLAGVFLSLLYEHFF). Topologically, residues 1142 to 1203 (VEKVVAIHFE…DRKETIESKC (62 aa)) are cytoplasmic.

It belongs to the cation transport ATPase (P-type) (TC 3.A.3) family. Type V subfamily. In terms of tissue distribution, expressed in the 20 intestinal cells and in the excretory cell.

It localises to the apical cell membrane. The enzyme catalyses ATP + H2O = ADP + phosphate + H(+). Functionally, involved in the uptake and/or transport of polyamines, probably through ATP hydrolysis. This contributes to the maintenance of intracellular polyamine levels. Polyamines are essential for cell proliferation and are implicated in cellular processes, ranging from DNA replication to apoptosis. The protein is Cation-transporting ATPase catp-5 of Caenorhabditis elegans.